We begin with the raw amino-acid sequence, 381 residues long: Hydrogenase nickel incorporation protein HupN (381 aa).

Residues 1–39 (MLPFSMTGLEKDHTRGVLILANAHRRSERSRTASCAGPA) are Cytoplasmic-facing. A helical transmembrane segment spans residues 40–60 (VLFGGLITANIVAWAWAFALF). Residues 61–63 (ADR) are Periplasmic-facing. The chain crosses the membrane as a helical span at residues 64–84 (PVVMATALLAWVFGLRHAVDA). At 85-110 (DHIAAIDNVVRSLMQTGGTPRSAGLY) the chain is on the cytoplasmic side. Residues 111–131 (FALGHSSVVVVATMLLALGVV) form a helical membrane-spanning segment. The Periplasmic portion of the chain corresponds to 132–149 (SLGGDGLLKEIGSFIGAS). Residues 150 to 170 (VSALFLLVIAAINLAIFASLW) traverse the membrane as a helical segment. Topologically, residues 171–215 (RTFRKAREQGIRDAAGLDALLAHRGILVRLLGPMFRLVTKPWHMY) are cytoplasmic. Residues 216–236 (PLGFLFGLGFDTATEIGLLSI) traverse the membrane as a helical segment. The Periplasmic portion of the chain corresponds to 237–243 (SASEAAR). The helical transmembrane segment at 244–264 (GASLADVMVFPALFAAGMALV) threads the bilayer. The Cytoplasmic portion of the chain corresponds to 265 to 292 (DTADSTLMVSAYRWAFVDPMRKLWYNLT). Residues 293–313 (ITGASVAVALFIGGIEALGLI) traverse the membrane as a helical segment. Residues 314–333 (GNRLDLSGGVWTLIDALNES) are Periplasmic-facing. The chain crosses the membrane as a helical span at residues 334–354 (LANVGLAVIALFAIAWLLSIV). Topologically, residues 355–381 (LYRRLIAGSSGLADTEVLECADATEAV) are cytoplasmic.

It belongs to the NiCoT transporter (TC 2.A.52) family.

It localises to the cell inner membrane. In terms of biological role, involved in nickel incorporation/metabolism into the hydrogenase apoprotein. The protein is Hydrogenase nickel incorporation protein HupN (hupN) of Bradyrhizobium diazoefficiens (strain JCM 10833 / BCRC 13528 / IAM 13628 / NBRC 14792 / USDA 110).